We begin with the raw amino-acid sequence, 120 residues long: Large ribosomal subunit protein bL17 (120 aa).

Belongs to the bacterial ribosomal protein bL17 family. As to quaternary structure, part of the 50S ribosomal subunit. Contacts protein L32.

This is Large ribosomal subunit protein bL17 from Anoxybacillus flavithermus (strain DSM 21510 / WK1).